A 1148-amino-acid polypeptide reads, in one-letter code: Envelopment polyprotein (1148 aa).

An N-terminal signal peptide occupies residues 1-23; the sequence is MGELSPVCLYLLLQGLLLCNTGA. Residues 24 to 495 are Lumenal-facing; the sequence is ARNLNELKME…VPGLHGWATM (472 aa). 6 disulfides stabilise this stretch: Cys-34–Cys-159, Cys-68–Cys-165, Cys-117–Cys-136, Cys-141–Cys-146, Cys-183–Cys-193, and Cys-218–Cys-257. A glycan (N-linked (GlcNAc...) asparagine; by host) is linked at Asn-142. Asn-357 carries N-linked (GlcNAc...) asparagine; by host glycosylation. Intrachain disulfides connect Cys-386–Cys-445, Cys-390–Cys-399, Cys-415–Cys-434, and Cys-462–Cys-485. An N-linked (GlcNAc...) asparagine; by host glycan is attached at Asn-409. Residues 496 to 516 traverse the membrane as a helical segment; the sequence is LLLLTLCFGWVLIPTITMILL. The Cytoplasmic portion of the chain corresponds to 517–637; the sequence is KILIAFAYLC…LSLFRYRSRF (121 aa). The binding to the ribonucleoprotein stretch occupies residues 526–543; sequence CSKYNTDSKFRILIEKVK. 2 consecutive CCHC-type zinc fingers follow at residues 555–575 and 580–601; these read CEVC…RKSC and CPYC…FKVC. Binding to the ribonucleoprotein regions lie at residues 598–615, 602–613, and 621–635; these read FKVC…RKSL, KLTSRFQENLRK, and MQGC…RYRS. Residues 621–644 form the ITAM domain; that stretch reads MQGCYRTLSLFRYRSRFFVGLVWC. A YxxL motif is present at residues 625-628; it reads YRTL. Residues 638 to 658 form a helical membrane-spanning segment; that stretch reads FVGLVWCVLLVLELIVWAASA. At 659–1114 the chain is on the lumenal side; that stretch reads ETQNLNAGWT…EWILGVLNGN (456 aa). Disulfide bonds link Cys-745/Cys-780, Cys-749/Cys-787, Cys-761/Cys-894, Cys-775/Cys-905, Cys-790/Cys-913, Cys-816/Cys-825, Cys-833/Cys-842, and Cys-873/Cys-877. The segment at 767-787 is fusion loop; it reads YEYETGWGCNPPDCPGVGTGC. Asn-937 carries N-linked (GlcNAc...) asparagine; by host glycosylation. 5 cysteine pairs are disulfide-bonded: Cys-979/Cys-1009, Cys-1002/Cys-1054, Cys-1019/Cys-1024, Cys-1055/Cys-1060, and Cys-1094/Cys-1098. A helical membrane pass occupies residues 1115–1135; sequence WMVVAVLVVLLILSILLFTLC. Binding to the ribonucleoprotein regions lie at residues 1131–1143 and 1131–1148; these read LFTL…PSYR and LFTL…EHKP. At 1136–1148 the chain is on the cytoplasmic side; sequence CPRRPSYRKEHKP.

The protein belongs to the hantavirus envelope glycoprotein family. In terms of assembly, homodimer. Homotetramer; forms heterotetrameric Gn-Gc spikes in the pre-fusion conformation. Interacts (via C-terminus) with the nucleoprotein. Interacts with host TUFM; this interaction contributes to the virus-induced degradation of mitochondria by autophagy, which leads to degradation of host MAVS and inhibition of type I interferon (IFN) responses. Interacts with host MAP1LC3B; this interaction contributes to the virus-induced degradation of mitochondria by autophagy, which leads to degradation of host MAVS and inhibition of type I interferon (IFN) responses. As to quaternary structure, homodimer. Homotetramer; forms heterotetrameric Gn-Gc spikes in the pre-fusion conformation. Homotrimer; forms homotrimer in the post-fusion conformation at acidic pH. Interacts (via C-terminus) with the nucleoprotein. In terms of processing, envelope polyprotein precursor is quickly cleaved in vivo just after synthesis, presumably by host signal peptidase.

Its subcellular location is the virion membrane. The protein localises to the host cell surface. It localises to the host Golgi apparatus membrane. It is found in the host endoplasmic reticulum membrane. The protein resides in the host mitochondrion. In terms of biological role, forms homotetramers with glycoprotein C at the surface of the virion. Attaches the virion to host cell receptors including integrin ITGAV/ITGB3. This attachment induces virion internalization predominantly through clathrin-dependent endocytosis. Mediates the assembly and budding of infectious virus particles through its interaction with the nucleocapsid protein and the viral genome. May dysregulate normal immune and endothelial cell responses through an ITAM motif. Translocates to mitochondria, binds to host TUFM and recruits MAP1LC3B. These interactions induce mitochondrial autophagy and therefore destruction of host MAVS leading to inhibition of type I interferon (IFN) responses. Concomitant breakdown of glycoprotein N is apparently prevented by the nucleoprotein that may inhibit Gn-stimulated autophagosome-lysosome fusion. Interacts with the viral genomic RNA. Forms homotetramers with glycoprotein N at the surface of the virion. Attaches the virion to host cell receptors including integrin ITGAV/ITGB3. This attachment induces virion internalization predominantly through clathrin-dependent endocytosis. Class II fusion protein that promotes fusion of viral membrane with host endosomal membrane after endocytosis of the virion. The sequence is that of Envelopment polyprotein (GP) from Puumala virus (strain K27).